Here is a 160-residue protein sequence, read N- to C-terminus: Putative antiporter subunit mnhE2 (160 aa).

A run of 3 helical transmembrane segments spans residues 22–42 (HFKF…IYIL), 55–75 (IWVA…SSIS), and 100–120 (SDWS…STVI).

It belongs to the CPA3 antiporters (TC 2.A.63) subunit E family. As to quaternary structure, may form a heterooligomeric complex that consists of seven subunits: mnhA2, mnhB2, mnhC2, mnhD2, mnhE2, mnhF2 and mnhG2.

Its subcellular location is the cell membrane. The protein is Putative antiporter subunit mnhE2 (mnhE2) of Staphylococcus aureus (strain USA300).